We begin with the raw amino-acid sequence, 352 residues long: N-acetyl-gamma-glutamyl-phosphate reductase (352 aa).

The active site involves Cys-155.

Belongs to the NAGSA dehydrogenase family. Type 1 subfamily.

Its subcellular location is the cytoplasm. The catalysed reaction is N-acetyl-L-glutamate 5-semialdehyde + phosphate + NADP(+) = N-acetyl-L-glutamyl 5-phosphate + NADPH + H(+). It functions in the pathway amino-acid biosynthesis; L-arginine biosynthesis; N(2)-acetyl-L-ornithine from L-glutamate: step 3/4. In terms of biological role, catalyzes the NADPH-dependent reduction of N-acetyl-5-glutamyl phosphate to yield N-acetyl-L-glutamate 5-semialdehyde. The sequence is that of N-acetyl-gamma-glutamyl-phosphate reductase from Rippkaea orientalis (strain PCC 8801 / RF-1) (Cyanothece sp. (strain PCC 8801)).